The primary structure comprises 580 residues: Fumarate hydratase class I, aerobic (580 aa).

3 residues coordinate [4Fe-4S] cluster: Cys-105, Cys-224, and Cys-318.

The protein belongs to the class-I fumarase family. In terms of assembly, homodimer. Requires [4Fe-4S] cluster as cofactor.

The catalysed reaction is (S)-malate = fumarate + H2O. It carries out the reaction oxaloacetate = enol-oxaloacetate. Its pathway is carbohydrate metabolism; tricarboxylic acid cycle; (S)-malate from fumarate: step 1/1. Functionally, catalyzes the reversible hydration of fumarate to (S)-malate. Functions as an aerobic enzyme in the direction of malate formation as part of the citric acid cycle. Accounts for about 80% of the fumarase activity when the bacteria grow aerobically. To a lesser extent, also displays D-tartrate dehydratase activity in vitro, but is not able to convert (R)-malate, L-tartrate or meso-tartrate. Can also catalyze the isomerization of enol- to keto-oxaloacetate. The sequence is that of Fumarate hydratase class I, aerobic from Salmonella typhimurium (strain LT2 / SGSC1412 / ATCC 700720).